A 620-amino-acid polypeptide reads, in one-letter code: Tyrosine-protein kinase ITK/TSK (620 aa).

In terms of domain architecture, PH spans 4 to 111 (FILLEEQLIK…WVLALKEETR (108 aa)). The Btk-type zinc finger occupies 113-149 (NNSLVPKYHPNFWMDGKWRCCSQLEKLATGCAQYDPT). 4 residues coordinate Zn(2+): H121, C132, C133, and C143. An SH3 domain is found at 171–231 (PEETVVIALY…PSSYLVEKSP (61 aa)). The residue at position 180 (Y180) is a Phosphotyrosine; by autocatalysis. An SH2 domain is found at 239-338 (WYNKSISRDK…GLVTRLRYPV (100 aa)). A Protein kinase domain is found at 363–615 (LTFVQEIGSG…SRLLRQLAEI (253 aa)). ATP contacts are provided by residues 369-377 (IGSGQFGLV) and K391. The active-site Proton acceptor is D482. At Y512 the chain carries Phosphotyrosine; by LCK. S565 bears the Phosphoserine mark.

It belongs to the protein kinase superfamily. Tyr protein kinase family. TEC subfamily. In terms of assembly, homooligomerizes; this association negatively regulates kinase activity. Interacts with PPIA/CYPA; this interaction regulates TCR signal strength via a proline-directed conformational switch in ITK. Interacts with THEMIS. Interacts with FASLG. Interacts with VAV1; this interaction is important for VAV1 localization and TCR-induced actin polarization. Interacts with TBX21. Requires Zn(2+) as cofactor. Phosphorylated at Tyr-512 in the activation loop of the kinase domain by LCK. Subsequent autophosphorylation at Tyr-180 leads to the kinase activation. The autophosphorylated Tyr-180 lies within the substrate binding sequence of the SH3 domain. Post-translationally, ubiquitinated. In terms of tissue distribution, T-cell lines and natural killer cell lines.

Its subcellular location is the cytoplasm. It localises to the nucleus. The catalysed reaction is L-tyrosyl-[protein] + ATP = O-phospho-L-tyrosyl-[protein] + ADP + H(+). In terms of biological role, tyrosine kinase that plays an essential role in regulation of the adaptive immune response. Regulates the development, function and differentiation of conventional T-cells and nonconventional NKT-cells. When antigen presenting cells (APC) activate T-cell receptor (TCR), a series of phosphorylation lead to the recruitment of ITK to the cell membrane, in the vicinity of the stimulated TCR receptor, where it is phosphorylated by LCK. Phosphorylation leads to ITK autophosphorylation and full activation. Once activated, phosphorylates PLCG1, leading to the activation of this lipase and subsequent cleavage of its substrates. In turn, the endoplasmic reticulum releases calcium in the cytoplasm and the nuclear activator of activated T-cells (NFAT) translocates into the nucleus to perform its transcriptional duty. Phosphorylates 2 essential adapter proteins: the linker for activation of T-cells/LAT protein and LCP2. Then, a large number of signaling molecules such as VAV1 are recruited and ultimately lead to lymphokine production, T-cell proliferation and differentiation. Required for TCR-mediated calcium response in gamma-delta T-cells, may also be involved in the modulation of the transcriptomic signature in the Vgamma2-positive subset of immature gamma-delta T-cells. Phosphorylates TBX21 at 'Tyr-530' and mediates its interaction with GATA3. The polypeptide is Tyrosine-protein kinase ITK/TSK (ITK) (Homo sapiens (Human)).